Reading from the N-terminus, the 252-residue chain is Phosphosulfolactate synthase (252 aa).

This sequence belongs to the phosphosulfolactate synthase family.

It carries out the reaction (2R)-O-phospho-3-sulfolactate = phosphoenolpyruvate + sulfite + H(+). In terms of biological role, catalyzes the addition of sulfite to phosphoenolpyruvate (PEP) to yield (2R)-phospho-3-sulfolactate (PSL). Is probably involved in the biosynthesis of L-sulfolactate, which is a major constituent of sporulating cells and mature spores. The protein is Phosphosulfolactate synthase (yitD) of Bacillus subtilis (strain 168).